Consider the following 484-residue polypeptide: Protein arginine methyltransferase NDUFAF7 homolog, mitochondrial (484 aa).

The N-terminal 12 residues, Met-1–Asn-12, are a transit peptide targeting the mitochondrion.

It belongs to the NDUFAF7 family. As to quaternary structure, homodimer. Interacts with ndufs2.

Its subcellular location is the mitochondrion. The enzyme catalyses L-arginyl-[protein] + 2 S-adenosyl-L-methionine = N(omega),N(omega)'-dimethyl-L-arginyl-[protein] + 2 S-adenosyl-L-homocysteine + 2 H(+). Its function is as follows. Involved in the assembly or stability of mitochondrial NADH:ubiquinone oxidoreductase complex (complex I). Acts as an arginine methyltransferase and probably acts by mediating arginine methylation of ndufs2. This is Protein arginine methyltransferase NDUFAF7 homolog, mitochondrial from Dictyostelium discoideum (Social amoeba).